The chain runs to 377 residues: Glutamate 5-kinase (377 aa).

Lys18 provides a ligand contact to ATP. Ser59, Asp146, and Asn158 together coordinate substrate. Residues 178 to 179 and 222 to 228 contribute to the ATP site; these read SD and TGGMATK. A PUA domain is found at 286–363; it reads QGWVTVDAGA…DAIEAELGFT (78 aa).

Belongs to the glutamate 5-kinase family.

It localises to the cytoplasm. It carries out the reaction L-glutamate + ATP = L-glutamyl 5-phosphate + ADP. The protein operates within amino-acid biosynthesis; L-proline biosynthesis; L-glutamate 5-semialdehyde from L-glutamate: step 1/2. Its function is as follows. Catalyzes the transfer of a phosphate group to glutamate to form L-glutamate 5-phosphate. In Caulobacter vibrioides (strain ATCC 19089 / CIP 103742 / CB 15) (Caulobacter crescentus), this protein is Glutamate 5-kinase.